A 179-amino-acid chain; its full sequence is Large ribosomal subunit protein uL6 (179 aa).

This sequence belongs to the universal ribosomal protein uL6 family. As to quaternary structure, part of the 50S ribosomal subunit.

In terms of biological role, this protein binds to the 23S rRNA, and is important in its secondary structure. It is located near the subunit interface in the base of the L7/L12 stalk, and near the tRNA binding site of the peptidyltransferase center. In Streptomyces avermitilis (strain ATCC 31267 / DSM 46492 / JCM 5070 / NBRC 14893 / NCIMB 12804 / NRRL 8165 / MA-4680), this protein is Large ribosomal subunit protein uL6.